Consider the following 631-residue polypeptide: DNA ligase (631 aa).

Residues 37-41 (DAHYD) and 79-80 (ST) contribute to the NAD(+) site. Lysine 115 (N6-AMP-lysine intermediate) is an active-site residue. Residues arginine 131, glutamate 160, and lysine 272 each contribute to the NAD(+) site. The Zn(2+) site is built by cysteine 361, cysteine 364, cysteine 377, and cysteine 382. The region spanning 539 to 630 (DVSSPISGKG…SQSSPEQMSL (92 aa)) is the BRCT domain.

It belongs to the NAD-dependent DNA ligase family. LigA subfamily. The cofactor is Mg(2+). Requires Mn(2+) as cofactor.

It catalyses the reaction NAD(+) + (deoxyribonucleotide)n-3'-hydroxyl + 5'-phospho-(deoxyribonucleotide)m = (deoxyribonucleotide)n+m + AMP + beta-nicotinamide D-nucleotide.. Its function is as follows. DNA ligase that catalyzes the formation of phosphodiester linkages between 5'-phosphoryl and 3'-hydroxyl groups in double-stranded DNA using NAD as a coenzyme and as the energy source for the reaction. It is essential for DNA replication and repair of damaged DNA. In Desulfatibacillum aliphaticivorans, this protein is DNA ligase.